Reading from the N-terminus, the 493-residue chain is Transmembrane protein 145 (493 aa).

A helical membrane pass occupies residues 9-29 (LRRLLPPLLLLLLSLPPRARA). A glycan (N-linked (GlcNAc...) asparagine) is linked at Asn-35. 7 helical membrane-spanning segments follow: residues 175–195 (VTFL…GYLL), 207–227 (MFMA…IYWG), 241–261 (ILAK…LILL), 282–302 (VYMT…AEFF), 318–338 (GLIG…LVSL), 349–369 (VPFF…ALIA), and 381–401 (IVNG…LIMT). N-linked (GlcNAc...) asparagine glycosylation occurs at Asn-444. Residues 464-493 (PATSPLPRAAPDSGLPLFRDLRPPGPLRDL) form a disordered region.

Its subcellular location is the membrane. This is Transmembrane protein 145 (TMEM145) from Homo sapiens (Human).